Here is a 380-residue protein sequence, read N- to C-terminus: MAKRDYYEALGVARNASDAEIKKAYRRLAMRYHPDRNPDDKAAEEHFKEIQEAYDVLSDARKRTAYDQFGHAGVGAGASAGPGGHGFEGGSNFGDIFGDVFNDIFGAAAGRGGRRQAYRGADLRYNLDLTLEEAVAGTTAKIRIPTYVACKACEGSGAKPGTSPITCPTCGGHGQVRMQQGFFSLQQTCPRCHGSGQIVDSPCSTCRGEGRVREHKTLSVKIPPGVDTGDRIRLTGEGEAGESGGPPGDLYVQVQIKAHSIFSREGDALHCEVPVSFVAAALGGELDVPTLTGRAKLKIPAGTQSGQVFRLRGKGVSPVRGGSAGDLLCRVMVETPVNLNQEQKELLEKFEASMNRNKKHSPKHHSWLEGVKRFFEDMKF.

The region spanning 5 to 70 (DYYEALGVAR…RKRTAYDQFG (66 aa)) is the J domain. The CR-type zinc finger occupies 137-215 (GTTAKIRIPT…CRGEGRVREH (79 aa)). 8 residues coordinate Zn(2+): Cys150, Cys153, Cys167, Cys170, Cys189, Cys192, Cys203, and Cys206. CXXCXGXG motif repeat units lie at residues 150–157 (CKACEGSG), 167–174 (CPTCGGHG), 189–196 (CPRCHGSG), and 203–210 (CSTCRGEG). Positions 222–247 (IPPGVDTGDRIRLTGEGEAGESGGPP) are disordered.

Belongs to the DnaJ family. As to quaternary structure, homodimer. Zn(2+) is required as a cofactor.

The protein resides in the cytoplasm. Functionally, participates actively in the response to hyperosmotic and heat shock by preventing the aggregation of stress-denatured proteins and by disaggregating proteins, also in an autonomous, DnaK-independent fashion. Unfolded proteins bind initially to DnaJ; upon interaction with the DnaJ-bound protein, DnaK hydrolyzes its bound ATP, resulting in the formation of a stable complex. GrpE releases ADP from DnaK; ATP binding to DnaK triggers the release of the substrate protein, thus completing the reaction cycle. Several rounds of ATP-dependent interactions between DnaJ, DnaK and GrpE are required for fully efficient folding. Also involved, together with DnaK and GrpE, in the DNA replication of plasmids through activation of initiation proteins. The chain is Chaperone protein DnaJ from Nitrosococcus oceani (strain ATCC 19707 / BCRC 17464 / JCM 30415 / NCIMB 11848 / C-107).